The chain runs to 66 residues: Toxin NaTx-4 (66 aa).

One can recognise an LCN-type CS-alpha/beta domain in the interval 1-64; that stretch reads KEGYLVNKET…TFPIPGKTCS (64 aa). 4 disulfides stabilise this stretch: cysteine 12/cysteine 63, cysteine 16/cysteine 39, cysteine 25/cysteine 44, and cysteine 29/cysteine 46.

This sequence belongs to the long (4 C-C) scorpion toxin superfamily. Sodium channel inhibitor family. As to expression, expressed by the venom gland.

The protein resides in the secreted. Its function is as follows. Probable sodium channel inhibitor. This is Toxin NaTx-4 from Centruroides sculpturatus (Arizona bark scorpion).